We begin with the raw amino-acid sequence, 405 residues long: L-carnitine CoA-transferase (405 aa).

CoA contacts are provided by K97 and R104. D169 acts as the Nucleophile in catalysis.

It belongs to the CoA-transferase III family. CaiB subfamily. In terms of assembly, homodimer.

It localises to the cytoplasm. It carries out the reaction crotonobetainyl-CoA + (R)-carnitine = crotonobetaine + (R)-carnitinyl-CoA. The catalysed reaction is 4-(trimethylamino)butanoyl-CoA + (R)-carnitine = (R)-carnitinyl-CoA + 4-(trimethylamino)butanoate. The protein operates within amine and polyamine metabolism; carnitine metabolism. Its function is as follows. Catalyzes the reversible transfer of the CoA moiety from gamma-butyrobetainyl-CoA to L-carnitine to generate L-carnitinyl-CoA and gamma-butyrobetaine. Is also able to catalyze the reversible transfer of the CoA moiety from gamma-butyrobetainyl-CoA or L-carnitinyl-CoA to crotonobetaine to generate crotonobetainyl-CoA. The polypeptide is L-carnitine CoA-transferase (Salmonella enteritidis PT4 (strain P125109)).